A 976-amino-acid chain; its full sequence is Ubiquitin ligase-binding protein BUL1 (976 aa).

The disordered stretch occupies residues 1–65 (MAKDLNDSGF…SPSLHSPKSW (65 aa)). A compositionally biased stretch (polar residues) spans 23–39 (SDFTANSSTTMNVNANT). Over residues 53–64 (SSRSPSLHSPKS) the composition is skewed to low complexity. Phosphoserine occurs at positions 58 and 70. Disordered stretches follow at residues 82-124 (LAHS…DGDI), 145-196 (PQGN…SSST), and 857-878 (SEDS…ASLT). The PY-motif motif lies at 156–160 (FPPSY). A compositionally biased stretch (low complexity) spans 163–176 (ANNSTATGAAGSSA). The segment covering 177–196 (DLSHQSLSTDALGATRSSST) has biased composition (polar residues). Positions 862–878 (SHTGNGSSSSPSSASLT) are enriched in low complexity.

Belongs to the BUL1 family. As to quaternary structure, component of the RSP5-BUL1/2 ubiquitin ligase complex composed of at least RSP5 and BUL1 or BUL2.

Its subcellular location is the cytoplasm. It participates in protein modification; protein ubiquitination. Component of a RSP5 ubiquitin ligase complex which specifies polyubiquitination and intracellular trafficking of the general amino acid permease GAP1 as well as other permeases such as PMA1. The RSP5-BUL1/2 complex is also necessary for the heat-shock element (HSE)-mediated gene expression, nitrogen starvation GLN3-dependent transcription and pressure-induced differential regulation of the 2 tryptophan permeases TAT1 and TAT2. The polypeptide is Ubiquitin ligase-binding protein BUL1 (BUL1) (Saccharomyces cerevisiae (strain ATCC 204508 / S288c) (Baker's yeast)).